A 472-amino-acid polypeptide reads, in one-letter code: MTNFLSEDFLLMNEYDRELYYTFAKNMPICDYHCHLSPQEIWENKPFENMTKAWLGGDHYKWRAMRLNGVREEFITGGAPDKEKFLAWAKTVPKTIGNPLYHWTHMELKTYFHFHQPLDETNGENVWDACNRLLQQEAFTPRALIERSNVRAIGTTDDPTDSLLYHQKLQADDTFHVKVIPTFRPDGALKIEQDSFADWVAKLSDVTGESLDTLDAFLHALKERLTFFDEHGCRSSDHDMTEVPFVEVNEQEAQHIFRKRLANEGLTKVENEKYKTFLMTWLGKEYAARGWVMQWHIGVMRNNNSRMLHKLGPDTGFDSIGDGQIAHATAKLLDLLDKQGALPKTILYCVNPNANYILASMIGNFTESGVRGKVQFGSAWWFNDHIDGMRRQLTDLASVGLLSNFIGMLTDSRSFLSYPRHDYFRRILCQLIGSWIKEGQLPPDMERWGQIVQDICYNNVVDYFDMKETVRL.

The protein belongs to the metallo-dependent hydrolases superfamily. Uronate isomerase family.

It catalyses the reaction D-glucuronate = D-fructuronate. The catalysed reaction is aldehydo-D-galacturonate = keto-D-tagaturonate. It participates in carbohydrate metabolism; pentose and glucuronate interconversion. This Halalkalibacterium halodurans (strain ATCC BAA-125 / DSM 18197 / FERM 7344 / JCM 9153 / C-125) (Bacillus halodurans) protein is Uronate isomerase.